The sequence spans 219 residues: Mediator of RNA polymerase II transcription subunit 18 (219 aa).

It belongs to the Mediator complex subunit 18 family. In terms of assembly, component of the Mediator complex. Interacts with YY1 to suppress disease susceptibility via the repression of genes glutaredoxins GRX480, GRXS13 and thioredoxin TRX-h5. Binds to ABI4 to regulate abscisic acid responses; recruited by ABI4 to ABI5 promoter in the presence of abscisic acid (ABA). Interacts with SUF4 to regulate flowering time; recruited by SUF4 to FLC promoter.

It is found in the nucleus. Its function is as follows. Component of the Mediator complex, a coactivator involved in the regulated transcription of nearly all RNA polymerase II-dependent genes. Mediator functions as a bridge to convey information from gene-specific regulatory proteins to the basal RNA polymerase II transcription machinery. The Mediator complex, having a compact conformation in its free form, is recruited to promoters by direct interactions with regulatory proteins and serves for the assembly of a functional pre-initiation complex with RNA polymerase II and the general transcription factors. Involved in the regulation of histone H3 lysine tri-methylation (H3K36me3). Associates with the promoter, coding and terminator regions of target genes suggesting its function in transcription initiation, elongation and termination. Multifunctional protein which regulates plant immunity, especially during necrotrophic fungal infection (e.g. B.cinerea and A.brassicicola), flowering time and responses to hormones (e.g. abscisic acid ABA and ethylene) through interactions with distinct transcription factors. The polypeptide is Mediator of RNA polymerase II transcription subunit 18 (Arabidopsis thaliana (Mouse-ear cress)).